The chain runs to 358 residues: Peptide chain release factor 1 (358 aa).

N5-methylglutamine is present on glutamine 233.

Belongs to the prokaryotic/mitochondrial release factor family. Methylated by PrmC. Methylation increases the termination efficiency of RF1.

It is found in the cytoplasm. Peptide chain release factor 1 directs the termination of translation in response to the peptide chain termination codons UAG and UAA. In Staphylococcus epidermidis (strain ATCC 35984 / DSM 28319 / BCRC 17069 / CCUG 31568 / BM 3577 / RP62A), this protein is Peptide chain release factor 1.